A 736-amino-acid chain; its full sequence is Poly(A) polymerase gamma (736 aa).

Lys2 carries the N6-acetyllysine modification. Phosphoserine occurs at positions 23 and 29. ATP contacts are provided by residues 99-101 (FGS), Thr108, 112-114 (DID), Asp166, Lys227, Tyr236, and 245-246 (GV). Mg(2+) contacts are provided by Asp112, Asp114, and Asp166. Residues 506 to 564 (KQSLSDVNRSSGGLQSKRLSLDSSCLDSSRDTDNGTPFNSPASKSDSPSVGETERNSAE) are disordered. Residues 509–519 (LSDVNRSSGGL) show a composition bias toward polar residues. Low complexity predominate over residues 521–532 (SKRLSLDSSCLD). The residue at position 525 (Ser525) is a Phosphoserine. Residues 539–555 (NGTPFNSPASKSDSPSV) show a composition bias toward polar residues. A phosphoserine mark is found at Ser599 and Ser648. Residue Thr654 is modified to Phosphothreonine. Positions 673–685 (DPRTAEERKRKSV) are enriched in basic and acidic residues. The interval 673–720 (DPRTAEERKRKSVDAIGGESMPIPTIDTSRKKRLPSKELPDSSSPVPA) is disordered. A phosphoserine mark is found at Ser684 and Ser708.

This sequence belongs to the poly(A) polymerase family. Mg(2+) is required as a cofactor. The cofactor is Mn(2+). As to expression, expressed predominantly in testis, and weakly in other tissues. Overexpressed in several tumors.

The protein resides in the nucleus. The enzyme catalyses RNA(n) + ATP = RNA(n)-3'-adenine ribonucleotide + diphosphate. In terms of biological role, responsible for the post-transcriptional adenylation of the 3'-terminal of mRNA precursors and several small RNAs including signal recognition particle (SRP) RNA, nuclear 7SK RNA, U2 small nuclear RNA, and ribosomal 5S RNA. This is Poly(A) polymerase gamma from Homo sapiens (Human).